Consider the following 322-residue polypeptide: Stage V sporulation protein K (322 aa).

Position 99–106 (99–106 (GNPGTGKT)) interacts with ATP.

It belongs to the CbxX/CfxQ family.

The sequence is that of Stage V sporulation protein K (spoVK) from Bacillus subtilis (strain 168).